We begin with the raw amino-acid sequence, 371 residues long: T-cell acute lymphocytic leukemia protein 1 (371 aa).

Residues 1–71 (MMEKRQPELC…DVPLQNSSNG (71 aa)) are disordered. The segment covering 34–57 (GCKEDEESKREEGDKEGGGRFKGD) has biased composition (basic and acidic residues). A bHLH domain is found at 204–256 (VRRIFTNSRERWRQQNVNGAFAELRKLIPTHPPDKKLSKNEILRLAMKYISFL). Residues 263–371 (QDGGRNVSST…GRPLDGSSRR (109 aa)) are disordered. Over residues 293–305 (HQDRVVGLARDDI) the composition is skewed to basic and acidic residues. Positions 321-335 (GDADGSPESFMEDQD) are enriched in acidic residues.

Expressed in the main hemopoietic organs in adults, namely the kidney and the spleen. Also expressed in the liver, brain, gill and gonads.

It is found in the nucleus. Functionally, transcription factor that plays a pivotal role in hemopoietic and endothelial development. This is T-cell acute lymphocytic leukemia protein 1 from Takifugu rubripes (Japanese pufferfish).